The chain runs to 252 residues: Probable transcriptional regulatory protein Bcav_1989 (252 aa).

It belongs to the TACO1 family.

It is found in the cytoplasm. This is Probable transcriptional regulatory protein Bcav_1989 from Beutenbergia cavernae (strain ATCC BAA-8 / DSM 12333 / CCUG 43141 / JCM 11478 / NBRC 16432 / NCIMB 13614 / HKI 0122).